Reading from the N-terminus, the 747-residue chain is MAARKNQKSPKPKVASSKLKNIKKSSKRNNSQSSTEPRKNATSLDSKKTTKKGVALPEIAERELTQEDIEFFNENPSSLKYLSSINPEDLGKKVEKGPRPDIYDLKKSQQFELDTSRLSSDEESVLDYSKDSEDEQDYELRPRVSSSWNNESYNRLPIKTKDGLLQNVVADVNNGEEFLSESESEASLEIDSDIKDEKQKSLEEQKIAPEIPVKQQIKNDKEALGIQAQQLLEEPVENLHLIRNIFEKFDSPYITIKKLSLLTLLAVFRDIIPGYKIRPLSEEEQGTKLSKEVAQRWEYEQTLLKHYAKFLQTLETILKSFSSTLDETQLSLYQVAVRCCTKLIEQASHFNLSEKLFALAVRQISHKTKRPGFDGIINSLKNIFEEDNLGKTSLKCVTILSRMFKQRNYDVLPDVYDLFLSVNILNDMKIKDEAWQDDTTNFKKRKKDLPYLTKKARKNYKETKKITQEMKEADAVITAQDKEKYQSEILKIIFITYFKTLQLKGKLIGNALEGVARLSHLLNIEFLGDLLQVLRELVMDDTVFLPKDKSGVQATREALLTVSTAFEIASAQGVGKLNLDLDLGLFVQRLYKIIFPFSLNPDADLNLKIKRLKDPDAPSKPFVVNATTEMEMLLKCFQVFFFKSKNISSSRLSSFSKRLAIASMQLPEHSASADLALLKKLLSRYSKLSRLLTSEEQIGDGIYNPFIEDPDLSNSSTAVLYEPFLLKNHYSPAVSQSAKELLKSTSL.

Residues 1–11 (MAARKNQKSPK) show a composition bias toward basic residues. The interval 1–142 (MAARKNQKSP…EDEQDYELRP (142 aa)) is disordered. Over residues 74-86 (ENPSSLKYLSSIN) the composition is skewed to polar residues. A compositionally biased stretch (basic and acidic residues) spans 89–109 (DLGKKVEKGPRPDIYDLKKSQ). S120 is modified (phosphoserine). Positions 214 to 234 (KQQIKNDKEALGIQAQQLLEE) form a coiled coil.

Belongs to the CBF/MAK21 family.

It localises to the nucleus. The protein resides in the nucleolus. In terms of biological role, may be required for synthesis of 60S ribosomal subunits and the transport of pre-ribosomes from the nucleoplasm to the cytoplasm. The protein is Nucleolar complex-associated protein 3 (noc3) of Schizosaccharomyces pombe (strain 972 / ATCC 24843) (Fission yeast).